Here is a 317-residue protein sequence, read N- to C-terminus: Ribosomal protein L11 methyltransferase (317 aa).

S-adenosyl-L-methionine contacts are provided by threonine 158, glycine 179, aspartate 201, and asparagine 244.

It belongs to the methyltransferase superfamily. PrmA family.

The protein resides in the cytoplasm. It catalyses the reaction L-lysyl-[protein] + 3 S-adenosyl-L-methionine = N(6),N(6),N(6)-trimethyl-L-lysyl-[protein] + 3 S-adenosyl-L-homocysteine + 3 H(+). Functionally, methylates ribosomal protein L11. The sequence is that of Ribosomal protein L11 methyltransferase from Streptococcus pyogenes serotype M12 (strain MGAS2096).